Reading from the N-terminus, the 216-residue chain is LexA repressor (216 aa).

Positions 28–48 (RAEIAAELGFSSANSAEEHLR) form a DNA-binding region, H-T-H motif. Residues S134 and K171 each act as for autocatalytic cleavage activity in the active site.

This sequence belongs to the peptidase S24 family. Homodimer.

The enzyme catalyses Hydrolysis of Ala-|-Gly bond in repressor LexA.. Its function is as follows. Represses a number of genes involved in the response to DNA damage (SOS response), including recA and lexA. In the presence of single-stranded DNA, RecA interacts with LexA causing an autocatalytic cleavage which disrupts the DNA-binding part of LexA, leading to derepression of the SOS regulon and eventually DNA repair. In Paraburkholderia xenovorans (strain LB400), this protein is LexA repressor.